The chain runs to 381 residues: MPFSNSHNTQKLRFPAEDEFPDLSSHNNHMAKVLTPELYAELRAKCTPSGFTLDDAIQTGVDNPGHPYIMTVGAVAGDEESYDVFKDLFDPIIEDRHGGYQPSDEHKTDLNPDNLQGGDDLDPNYVLSSRVRTGRSIRGFCLPPHCSRGERRAIEKLAVEALSSLDGDLSGRYYALKSMTEAEQQQLIDDHFLFDKPVSPLLLASGMARDWPDARGIWHNDNKTFLVWINEEDHLRVISMQKGGNMKEVFTRFCTGLTQIETLFKSKNYEFMWNPHLGYILTCPSNLGTGLRAGVHIKLPHLGKHEKFSEVLKRLRLQKRGTGGVDTAAVGGVFDVSNADRLGFSEVELVQMVVDGVKLLIEMEQRLEQGQPIDDLMPAQK.

S4 is modified (phosphoserine). A Phosphagen kinase N-terminal domain is found at 11–98; sequence KLRFPAEDEF…FDPIIEDRHG (88 aa). At T35 the chain carries Phosphothreonine. Residue K45 forms a Glycyl lysine isopeptide (Lys-Gly) (interchain with G-Cter in ubiquitin) linkage. Residue V72 participates in creatine binding. Residues 96–110 are compositionally biased toward basic and acidic residues; the sequence is RHGGYQPSDEHKTDL. Positions 96-122 are disordered; that stretch reads RHGGYQPSDEHKTDLNPDNLQGGDDLD. K107 participates in a covalent cross-link: Glycyl lysine isopeptide (Lys-Gly) (interchain with G-Cter in ubiquitin). Y125 is modified (phosphotyrosine). In terms of domain architecture, Phosphagen kinase C-terminal spans 125-367; the sequence is YVLSSRVRTG…KLLIEMEQRL (243 aa). ATP is bound by residues 128-132, R130, R132, and H191; that span reads SSRVR. An internal MTS-like signal region spans residues 130–138; it reads RVRTGRSIR. S199 carries the post-translational modification Phosphoserine. Position 232 (E232) interacts with creatine. R236 serves as a coordination point for ATP. At Y269 the chain carries 3'-nitrotyrosine. S285 lines the creatine pocket. R292 contacts ATP. S309 is subject to Phosphoserine. Residues R320, 320–325, and D335 each bind ATP; that span reads RGTGGV. A Phosphothreonine modification is found at T322. Residue K381 forms a Glycyl lysine isopeptide (Lys-Gly) (interchain with G-Cter in ubiquitin) linkage.

The protein belongs to the ATP:guanido phosphotransferase family. As to quaternary structure, dimer of identical or non-identical chains, which can be either B (brain type) or M (muscle type). With MM being the major form in skeletal muscle and myocardium, MB existing in myocardium, and BB existing in many tissues, especially brain. Interacts with SLC12A6 (via C-terminus); the interaction may be required for SLC12A6 potassium-chloride cotransport activity. Ubiquitinated by the ECS(ASB9) complex, leading to its degradation by the proteasome. As to expression, in the kidney localized primarily in the outer medulla in the thick ascending limb and distal convoluted tubule.

Its subcellular location is the cytoplasm. It localises to the cytosol. It is found in the mitochondrion. The protein resides in the cell membrane. The catalysed reaction is creatine + ATP = N-phosphocreatine + ADP + H(+). Reversibly catalyzes the transfer of phosphate between ATP and various phosphogens (e.g. creatine phosphate). Creatine kinase isoenzymes play a central role in energy transduction in tissues with large, fluctuating energy demands, such as skeletal muscle, heart, brain and spermatozoa. Acts as a key regulator of adaptive thermogenesis as part of the futile creatine cycle: localizes to the mitochondria of thermogenic fat cells and acts by mediating phosphorylation of creatine to initiate a futile cycle of creatine phosphorylation and dephosphorylation. During the futile creatine cycle, creatine and N-phosphocreatine are in a futile cycle, which dissipates the high energy charge of N-phosphocreatine as heat without performing any mechanical or chemical work. The polypeptide is Creatine kinase B-type (Ckb) (Rattus norvegicus (Rat)).